The following is a 255-amino-acid chain: tRNA pseudouridine synthase A (255 aa).

Residue D60 is the Nucleophile of the active site. Residue Y118 coordinates substrate.

Belongs to the tRNA pseudouridine synthase TruA family. Homodimer.

The enzyme catalyses uridine(38/39/40) in tRNA = pseudouridine(38/39/40) in tRNA. Formation of pseudouridine at positions 38, 39 and 40 in the anticodon stem and loop of transfer RNAs. The chain is tRNA pseudouridine synthase A from Leuconostoc mesenteroides subsp. mesenteroides (strain ATCC 8293 / DSM 20343 / BCRC 11652 / CCM 1803 / JCM 6124 / NCDO 523 / NBRC 100496 / NCIMB 8023 / NCTC 12954 / NRRL B-1118 / 37Y).